A 414-amino-acid polypeptide reads, in one-letter code: Gamma-glutamyl phosphate reductase (414 aa).

It belongs to the gamma-glutamyl phosphate reductase family.

Its subcellular location is the cytoplasm. The enzyme catalyses L-glutamate 5-semialdehyde + phosphate + NADP(+) = L-glutamyl 5-phosphate + NADPH + H(+). It participates in amino-acid biosynthesis; L-proline biosynthesis; L-glutamate 5-semialdehyde from L-glutamate: step 2/2. Catalyzes the NADPH-dependent reduction of L-glutamate 5-phosphate into L-glutamate 5-semialdehyde and phosphate. The product spontaneously undergoes cyclization to form 1-pyrroline-5-carboxylate. The sequence is that of Gamma-glutamyl phosphate reductase from Bacillus anthracis (strain A0248).